Reading from the N-terminus, the 281-residue chain is Release factor glutamine methyltransferase (281 aa).

E141 and N185 together coordinate S-adenosyl-L-methionine. 185–188 lines the substrate pocket; that stretch reads NPPY.

Belongs to the protein N5-glutamine methyltransferase family. PrmC subfamily.

The enzyme catalyses L-glutaminyl-[peptide chain release factor] + S-adenosyl-L-methionine = N(5)-methyl-L-glutaminyl-[peptide chain release factor] + S-adenosyl-L-homocysteine + H(+). In terms of biological role, methylates the class 1 translation termination release factors RF1/PrfA and RF2/PrfB on the glutamine residue of the universally conserved GGQ motif. The sequence is that of Release factor glutamine methyltransferase from Mycolicibacterium smegmatis (strain ATCC 700084 / mc(2)155) (Mycobacterium smegmatis).